A 287-amino-acid chain; its full sequence is Undecaprenyl-diphosphatase (287 aa).

7 helical membrane-spanning segments follow: residues 6-26 (LHLL…FIPV), 45-65 (SGKV…MWIF), 89-109 (NLLL…KSIK), 111-131 (VFYH…IMLW), 204-224 (ATEF…VYDL), 238-258 (AIAV…RAVL), and 266-286 (YRVF…WIYA).

It belongs to the UppP family.

The protein localises to the cell inner membrane. The enzyme catalyses di-trans,octa-cis-undecaprenyl diphosphate + H2O = di-trans,octa-cis-undecaprenyl phosphate + phosphate + H(+). In terms of biological role, catalyzes the dephosphorylation of undecaprenyl diphosphate (UPP). Confers resistance to bacitracin. The chain is Undecaprenyl-diphosphatase from Bordetella bronchiseptica (strain ATCC BAA-588 / NCTC 13252 / RB50) (Alcaligenes bronchisepticus).